The sequence spans 350 residues: Hydroxymethylglutaryl-CoA synthase (350 aa).

Asp30 serves as a coordination point for (3S)-3-hydroxy-3-methylglutaryl-CoA. Glu82 acts as the Proton donor/acceptor in catalysis. (3S)-3-hydroxy-3-methylglutaryl-CoA-binding residues include Cys114, Ser155, Thr203, and His236. Cys114 serves as the catalytic Acyl-thioester intermediate. His236 acts as the Proton donor/acceptor in catalysis. Arg241 is a binding site for CoA. (3S)-3-hydroxy-3-methylglutaryl-CoA is bound by residues Arg245, Asn268, and Ser298.

The protein belongs to the thiolase-like superfamily. Archaeal HMG-CoA synthase family. Interacts with acetoacetyl-CoA thiolase that catalyzes the precedent step in the pathway and with a DUF35 protein. The acetoacetyl-CoA thiolase/HMG-CoA synthase complex channels the intermediate via a fused CoA-binding site, which allows for efficient coupling of the endergonic thiolase reaction with the exergonic HMGCS reaction.

The enzyme catalyses acetoacetyl-CoA + acetyl-CoA + H2O = (3S)-3-hydroxy-3-methylglutaryl-CoA + CoA + H(+). The protein operates within metabolic intermediate biosynthesis; (R)-mevalonate biosynthesis; (R)-mevalonate from acetyl-CoA: step 2/3. Catalyzes the condensation of acetyl-CoA with acetoacetyl-CoA to form 3-hydroxy-3-methylglutaryl-CoA (HMG-CoA). Functions in the mevalonate (MVA) pathway leading to isopentenyl diphosphate (IPP), a key precursor for the biosynthesis of isoprenoid compounds that are building blocks of archaeal membrane lipids. This chain is Hydroxymethylglutaryl-CoA synthase, found in Pyrobaculum aerophilum (strain ATCC 51768 / DSM 7523 / JCM 9630 / CIP 104966 / NBRC 100827 / IM2).